The following is a 328-amino-acid chain: Cytochrome c biogenesis protein CcsA (328 aa).

8 consecutive transmembrane segments (helical) span residues 13–33 (ISFSVVLIVMTIYFLTLLVNL), 46–66 (GIVITFFSITGFLFTRWIYSG), 73–93 (LYESLIFLSWAFSIIHMVSYF), 101–121 (LNAITAPSAIFIQGFATSGLL), 146–166 (MVLGYGALLCGSLLSIALLVI), 234–254 (IISLGFLFLTMGILSGAVWAN), 263–283 (WDPKETWAFITWTIFAIYLHI), and 295–315 (AIVASIGFLVIWICYFGVNLL).

Belongs to the CcmF/CycK/Ccl1/NrfE/CcsA family. In terms of assembly, may interact with Ccs1.

The protein resides in the plastid. The protein localises to the chloroplast thylakoid membrane. Functionally, required during biogenesis of c-type cytochromes (cytochrome c6 and cytochrome f) at the step of heme attachment. In Aethionema cordifolium (Lebanon stonecress), this protein is Cytochrome c biogenesis protein CcsA.